The following is a 314-amino-acid chain: DNA topoisomerase 1 (314 aa).

The Topo IB-type catalytic domain maps to 73–314 (GKMHVQRRNS…TDYITNTQTV (242 aa)). The active-site O-(3'-phospho-DNA)-tyrosine intermediate is the Tyr-273.

It belongs to the type IB topoisomerase family.

The catalysed reaction is ATP-independent breakage of single-stranded DNA, followed by passage and rejoining.. In terms of biological role, releases the supercoiling and torsional tension of DNA introduced during the DNA replication and transcription by transiently cleaving and rejoining one strand of the DNA duplex. Introduces a single-strand break via transesterification at a target site in duplex DNA. The scissile phosphodiester is attacked by the catalytic tyrosine of the enzyme, resulting in the formation of a DNA-(3'-phosphotyrosyl)-enzyme intermediate and the expulsion of a 5'-OH DNA strand. The free DNA strand then undergoes passage around the unbroken strand thus removing DNA supercoils. Finally, in the religation step, the DNA 5'-OH attacks the covalent intermediate to expel the active-site tyrosine and restore the DNA phosphodiester backbone. The chain is DNA topoisomerase 1 (TOP1) from Oryctolagus cuniculus (Rabbit).